We begin with the raw amino-acid sequence, 105 residues long: Large ribosomal subunit protein eL36 (105 aa).

The protein belongs to the eukaryotic ribosomal protein eL36 family. In terms of assembly, component of the large ribosomal subunit.

It is found in the cytoplasm. The protein resides in the cytosol. In terms of biological role, component of the large ribosomal subunit. The ribosome is a large ribonucleoprotein complex responsible for the synthesis of proteins in the cell. The polypeptide is Large ribosomal subunit protein eL36 (rpl36) (Danio rerio (Zebrafish)).